Reading from the N-terminus, the 143-residue chain is Cytochrome c-type biogenesis protein CcmE (143 aa).

Residues 1–8 (MTPVRRRK) are Cytoplasmic-facing. A helical; Signal-anchor for type II membrane protein transmembrane segment spans residues 9–29 (LFILLFALSVLSAAAALVLYA). The Periplasmic segment spans residues 30-143 (LRQNISLFYT…KSALADKVKQ (114 aa)). Heme-binding residues include H124 and Y128.

Belongs to the CcmE/CycJ family.

Its subcellular location is the cell inner membrane. Heme chaperone required for the biogenesis of c-type cytochromes. Transiently binds heme delivered by CcmC and transfers the heme to apo-cytochromes in a process facilitated by CcmF and CcmH. This is Cytochrome c-type biogenesis protein CcmE from Legionella pneumophila.